Here is a 60-residue protein sequence, read N- to C-terminus: Large ribosomal subunit protein uL30 (60 aa).

Belongs to the universal ribosomal protein uL30 family. Part of the 50S ribosomal subunit.

The sequence is that of Large ribosomal subunit protein uL30 from Nocardioides sp. (strain ATCC BAA-499 / JS614).